The primary structure comprises 176 residues: NAD(P)H-quinone oxidoreductase subunit 6, chloroplastic (176 aa).

Transmembrane regions (helical) follow at residues 10–30 (FLLVFLGSGLILGGLGVVLLP), 33–53 (IYSAFSLGFVLVCISLFYILL), 61–81 (AQLLIYVGAINVLIIFAVMFM), 92–112 (LWTIGDGVTSVVCTGLFISLI), and 152–172 (FFLPFELVSIILLVALIGAIA).

The protein belongs to the complex I subunit 6 family. NDH is composed of at least 16 different subunits, 5 of which are encoded in the nucleus.

Its subcellular location is the plastid. The protein localises to the chloroplast thylakoid membrane. The catalysed reaction is a plastoquinone + NADH + (n+1) H(+)(in) = a plastoquinol + NAD(+) + n H(+)(out). It carries out the reaction a plastoquinone + NADPH + (n+1) H(+)(in) = a plastoquinol + NADP(+) + n H(+)(out). Functionally, NDH shuttles electrons from NAD(P)H:plastoquinone, via FMN and iron-sulfur (Fe-S) centers, to quinones in the photosynthetic chain and possibly in a chloroplast respiratory chain. The immediate electron acceptor for the enzyme in this species is believed to be plastoquinone. Couples the redox reaction to proton translocation, and thus conserves the redox energy in a proton gradient. The sequence is that of NAD(P)H-quinone oxidoreductase subunit 6, chloroplastic (ndhG) from Coffea arabica (Arabian coffee).